Here is an 87-residue protein sequence, read N- to C-terminus: UPF0237 protein YjhC (87 aa).

One can recognise an ACT domain in the interval 4 to 76 (VVTVVGADKI…EALGVNIHVQ (73 aa)).

It belongs to the UPF0237 family.

In Lactococcus lactis subsp. lactis (strain IL1403) (Streptococcus lactis), this protein is UPF0237 protein YjhC (yjhC).